The primary structure comprises 200 residues: Recombination protein RecR (200 aa).

The segment at 58–75 (CSTCFCLKNLPESNCEFC) adopts a C4-type zinc-finger fold. Residues 82–177 (STLCIVATPK…SISRLALGLP (96 aa)) form the Toprim domain.

Belongs to the RecR family.

In terms of biological role, may play a role in DNA repair. It seems to be involved in an RecBC-independent recombinational process of DNA repair. It may act with RecF and RecO. In Chlamydia caviae (strain ATCC VR-813 / DSM 19441 / 03DC25 / GPIC) (Chlamydophila caviae), this protein is Recombination protein RecR.